Consider the following 484-residue polypeptide: L-carnitine dehydrogenase/betainyl-CoA thioesterase (484 aa).

An L-carnitine dehydrogenase region spans residues 1–322 (MKIAAIGGGV…ENRFYARNGK (322 aa)). 7–12 (GGGVIG) is an NAD(+) binding site. The segment at 323-484 (VQADYPLRLH…RAVRLKETSA (162 aa)) is betainyl-CoA thioesterase.

It in the N-terminal section; belongs to the 3-hydroxyacyl-CoA dehydrogenase family. L-carnitine dehydrogenase subfamily. The protein in the C-terminal section; belongs to the betainyl-CoA thioesterase family. Homodimer.

The protein localises to the cytoplasm. The enzyme catalyses carnitine + NAD(+) = 3-dehydrocarnitine + NADH + H(+). The catalysed reaction is N,N,N-trimethylglycyl-CoA + H2O = glycine betaine + CoA + H(+). Its pathway is amine and polyamine metabolism; carnitine metabolism. Multifunctional enzyme that catalyzes the NAD(+)-dependent oxidation of L-carnitine to 3-dehydrocarnitine and the cleavage of betainyl-CoA (N,N,N-trimethylglycyl-CoA) into glycine betaine and coenzyme A. The sequence is that of L-carnitine dehydrogenase/betainyl-CoA thioesterase from Agrobacterium fabrum (strain C58 / ATCC 33970) (Agrobacterium tumefaciens (strain C58)).